The following is a 156-amino-acid chain: Ribosomal RNA large subunit methyltransferase H (156 aa).

Residues Leu73, Gly104, and 123-128 each bind S-adenosyl-L-methionine; that span reads LSPLTL.

This sequence belongs to the RNA methyltransferase RlmH family. In terms of assembly, homodimer.

It is found in the cytoplasm. The catalysed reaction is pseudouridine(1915) in 23S rRNA + S-adenosyl-L-methionine = N(3)-methylpseudouridine(1915) in 23S rRNA + S-adenosyl-L-homocysteine + H(+). Its function is as follows. Specifically methylates the pseudouridine at position 1915 (m3Psi1915) in 23S rRNA. The polypeptide is Ribosomal RNA large subunit methyltransferase H (Photorhabdus laumondii subsp. laumondii (strain DSM 15139 / CIP 105565 / TT01) (Photorhabdus luminescens subsp. laumondii)).